Consider the following 411-residue polypeptide: Glucose-1-phosphate adenylyltransferase (411 aa).

Residues Gly162, 177-178 (EK), and Ser195 contribute to the alpha-D-glucose 1-phosphate site.

This sequence belongs to the bacterial/plant glucose-1-phosphate adenylyltransferase family. In terms of assembly, homotetramer.

It carries out the reaction alpha-D-glucose 1-phosphate + ATP + H(+) = ADP-alpha-D-glucose + diphosphate. It participates in glycan biosynthesis; glycogen biosynthesis. In terms of biological role, involved in the biosynthesis of ADP-glucose, a building block required for the elongation reactions to produce glycogen. Catalyzes the reaction between ATP and alpha-D-glucose 1-phosphate (G1P) to produce pyrophosphate and ADP-Glc. The polypeptide is Glucose-1-phosphate adenylyltransferase (Thermodesulfovibrio yellowstonii (strain ATCC 51303 / DSM 11347 / YP87)).